We begin with the raw amino-acid sequence, 520 residues long: Protein nucleotidyltransferase YdiU (520 aa).

8 residues coordinate ATP: G108, G110, R111, K130, D142, G143, R193, and R200. D269 acts as the Proton acceptor in catalysis. Mg(2+) is bound by residues N270 and D279. D279 is a binding site for ATP.

It belongs to the SELO family. It depends on Mg(2+) as a cofactor. Mn(2+) is required as a cofactor.

The catalysed reaction is L-seryl-[protein] + ATP = 3-O-(5'-adenylyl)-L-seryl-[protein] + diphosphate. It catalyses the reaction L-threonyl-[protein] + ATP = 3-O-(5'-adenylyl)-L-threonyl-[protein] + diphosphate. The enzyme catalyses L-tyrosyl-[protein] + ATP = O-(5'-adenylyl)-L-tyrosyl-[protein] + diphosphate. It carries out the reaction L-histidyl-[protein] + UTP = N(tele)-(5'-uridylyl)-L-histidyl-[protein] + diphosphate. The catalysed reaction is L-seryl-[protein] + UTP = O-(5'-uridylyl)-L-seryl-[protein] + diphosphate. It catalyses the reaction L-tyrosyl-[protein] + UTP = O-(5'-uridylyl)-L-tyrosyl-[protein] + diphosphate. Its function is as follows. Nucleotidyltransferase involved in the post-translational modification of proteins. It can catalyze the addition of adenosine monophosphate (AMP) or uridine monophosphate (UMP) to a protein, resulting in modifications known as AMPylation and UMPylation. The chain is Protein nucleotidyltransferase YdiU from Cupriavidus pinatubonensis (strain JMP 134 / LMG 1197) (Cupriavidus necator (strain JMP 134)).